Reading from the N-terminus, the 234-residue chain is Large ribosomal subunit protein uL1c (234 aa).

The protein belongs to the universal ribosomal protein uL1 family. In terms of assembly, part of the 50S ribosomal subunit.

The protein resides in the plastid. It is found in the chloroplast. In terms of biological role, binds directly to 23S rRNA. Might be involved in E site tRNA release (Potential). This chain is Large ribosomal subunit protein uL1c (rpl1), found in Guillardia theta (Cryptophyte).